A 462-amino-acid chain; its full sequence is Trigger factor (462 aa).

Residues 172 to 257 (GDKATIDFVG…LKALAAPGET (86 aa)) enclose the PPIase FKBP-type domain. Residues 443–462 (LLAADEEDEEEAAESSAALV) form a disordered region. A compositionally biased stretch (acidic residues) spans 444 to 455 (LAADEEDEEEAA).

It belongs to the FKBP-type PPIase family. Tig subfamily.

It localises to the cytoplasm. The catalysed reaction is [protein]-peptidylproline (omega=180) = [protein]-peptidylproline (omega=0). Involved in protein export. Acts as a chaperone by maintaining the newly synthesized protein in an open conformation. Functions as a peptidyl-prolyl cis-trans isomerase. The chain is Trigger factor from Methylocella silvestris (strain DSM 15510 / CIP 108128 / LMG 27833 / NCIMB 13906 / BL2).